Reading from the N-terminus, the 81-residue chain is Beta-catenin-interacting protein 1 (81 aa).

Ser-59 carries the phosphoserine modification.

Belongs to the CTNNBIP1 family. In terms of assembly, binds CTNNB1.

Its subcellular location is the cytoplasm. It localises to the nucleus. Its function is as follows. Prevents the interaction between CTNNB1 and TCF family members, and acts as a negative regulator of the Wnt signaling pathway. The polypeptide is Beta-catenin-interacting protein 1 (CTNNBIP1) (Bos taurus (Bovine)).